The primary structure comprises 299 residues: ATP phosphoribosyltransferase (299 aa).

The protein belongs to the ATP phosphoribosyltransferase family. Long subfamily. Equilibrium between an active dimeric form, an inactive hexameric form and higher aggregates. Interconversion between the various forms is largely reversible and is influenced by the natural substrates and inhibitors of the enzyme. Mg(2+) is required as a cofactor.

It localises to the cytoplasm. The catalysed reaction is 1-(5-phospho-beta-D-ribosyl)-ATP + diphosphate = 5-phospho-alpha-D-ribose 1-diphosphate + ATP. Its pathway is amino-acid biosynthesis; L-histidine biosynthesis; L-histidine from 5-phospho-alpha-D-ribose 1-diphosphate: step 1/9. Feedback inhibited by histidine. Catalyzes the condensation of ATP and 5-phosphoribose 1-diphosphate to form N'-(5'-phosphoribosyl)-ATP (PR-ATP). Has a crucial role in the pathway because the rate of histidine biosynthesis seems to be controlled primarily by regulation of HisG enzymatic activity. This chain is ATP phosphoribosyltransferase, found in Salmonella choleraesuis (strain SC-B67).